A 507-amino-acid polypeptide reads, in one-letter code: ATP synthase subunit alpha, chloroplastic (507 aa).

An ATP-binding site is contributed by 170 to 177; that stretch reads GDRQTGKT.

This sequence belongs to the ATPase alpha/beta chains family. F-type ATPases have 2 components, CF(1) - the catalytic core - and CF(0) - the membrane proton channel. CF(1) has five subunits: alpha(3), beta(3), gamma(1), delta(1), epsilon(1). CF(0) has four main subunits: a, b, b' and c.

It is found in the plastid. The protein localises to the chloroplast thylakoid membrane. The enzyme catalyses ATP + H2O + 4 H(+)(in) = ADP + phosphate + 5 H(+)(out). Produces ATP from ADP in the presence of a proton gradient across the membrane. The alpha chain is a regulatory subunit. This chain is ATP synthase subunit alpha, chloroplastic, found in Dioscorea elephantipes (Elephant's foot yam).